The primary structure comprises 573 residues: Arylsulfatase I (573 aa).

The N-terminal stretch at 1 to 23 (MHALTGLSLVSLLSFGYLSWDWA) is a signal peptide. Ca(2+) is bound by residues aspartate 56, aspartate 57, and cysteine 94. Cysteine 94 serves as the catalytic Nucleophile. Cysteine 94 is subject to 3-oxoalanine (Cys). Lysine 148 provides a ligand contact to substrate. The active site involves histidine 150. Histidine 240 is a binding site for substrate. N-linked (GlcNAc...) asparagine glycans are attached at residues asparagine 277 and asparagine 289. The Ca(2+) site is built by aspartate 298 and asparagine 299. Substrate is bound at residue lysine 316. 2 N-linked (GlcNAc...) asparagine glycosylation sites follow: asparagine 467 and asparagine 497. Positions 516–550 (FNGGAWGPWASDEEEEEEEEEAGRARSFSRGRRKK) are disordered. The span at 526 to 536 (SDEEEEEEEEE) shows a compositional bias: acidic residues.

Belongs to the sulfatase family. Ca(2+) is required as a cofactor. The oxidation of Cys-94 residue to 3-oxoalanine (also known as C(alpha)-formylglycine) by SUMF1/Sulfatase-modifying factor 1, seems critical for catalytic activity.

It localises to the secreted. Its subcellular location is the endoplasmic reticulum. Functionally, displays arylsulfatase activity at neutral pH, when co-expressed with SUMF1; arylsulfatase activity is measured in the secretion medium of retinal cell line, but no activity is recorded when measured in cell extracts. The chain is Arylsulfatase I (ARSI) from Canis lupus familiaris (Dog).